Here is a 99-residue protein sequence, read N- to C-terminus: UPF0320 protein YER188C-A (99 aa).

Belongs to the UPF0320 family.

The chain is UPF0320 protein YER188C-A from Saccharomyces cerevisiae (strain ATCC 204508 / S288c) (Baker's yeast).